Reading from the N-terminus, the 876-residue chain is MTGKEIRAQFFKFFEERGHTVVESSNLIPRNDPTLLFTNAGMNQFKDVFLGLEKRDYVRACSSQKCVRAGGKHNDLENVGRTARHHTFFEMLGNFSFGDYFKKEAIAFAWEFLTKELKLDKDRLYVTVYTDDDEAADIWNRQEGVPLERIYRFGEKDNFWSMGDTGPCGPCTEIFWDNGPGTGCGSPTCEVGCDCDRYMEIWNNVFMQFNRDAQGNLTPLPKPSVDTGMGLERISTVMQGVTSNYDTDLLQGIIKHVEKLSGKRYRQDERDDVSMRVIADHSRAITFLICDGILPSNEGRGYVLRRIMRRAARHAKMLGFAEPALYRIVDAVNTMMGDAYPELLEREEYIKKVIHAEEERFIETLDRGLAILNEEVAALKKEGKSVVPGEVIFKLYDTYGFPVDLTADIVENEGFTIDEDGFALCMERQRLQARENWKGSGEEGLAEIYKTLHGRGIRSAFVGYSEQTAYSAITAILREGAEVAEAVAGEMVEVVVDTTPFYGASGGQAGDTGVISTGSAHLRVVATSKPFPDLTVHRALVTEGTVKAGDAADLRVATEVRGATARNHTATHLLQSALRQVLGEHVKQAGSLVTAERLRFDFTHFSAMTVEELRRVENIVNTYVMDNADVKSLEMAATEAMQSGATALFGEKYGDRVRVVKVGEVSSELCGGTHVRAAGDIGFFKIVGEAGIAAGVRRIEALTGSGALEYVQQLEDEQRSIAVLVKAEGGTALDKVDRLLARQKELQREVEALQARLNASRSADLLAGARETNGIKVLAAKVEMDDPKGLRELADSLKDRLQSGVIVIGCVSAGKANLLVAVTKDLSDRLRAGDIIKSLAPIIGGSGGGKPELAQAGGTKPENLDEALEAAYKIIG.

Residues His568, His572, Cys670, and His674 each coordinate Zn(2+).

The protein belongs to the class-II aminoacyl-tRNA synthetase family. It depends on Zn(2+) as a cofactor.

Its subcellular location is the cytoplasm. It carries out the reaction tRNA(Ala) + L-alanine + ATP = L-alanyl-tRNA(Ala) + AMP + diphosphate. Its function is as follows. Catalyzes the attachment of alanine to tRNA(Ala) in a two-step reaction: alanine is first activated by ATP to form Ala-AMP and then transferred to the acceptor end of tRNA(Ala). Also edits incorrectly charged Ser-tRNA(Ala) and Gly-tRNA(Ala) via its editing domain. In Geotalea uraniireducens (strain Rf4) (Geobacter uraniireducens), this protein is Alanine--tRNA ligase.